A 477-amino-acid polypeptide reads, in one-letter code: Cobyric acid synthase (477 aa).

Residues Gly-248–Phe-432 form the GATase cobBQ-type domain. The active-site Nucleophile is the Cys-330. His-424 is a catalytic residue.

The protein belongs to the CobB/CobQ family. CobQ subfamily.

It functions in the pathway cofactor biosynthesis; adenosylcobalamin biosynthesis. Catalyzes amidations at positions B, D, E, and G on adenosylcobyrinic A,C-diamide. NH(2) groups are provided by glutamine, and one molecule of ATP is hydrogenolyzed for each amidation. This chain is Cobyric acid synthase, found in Paracoccus denitrificans (strain Pd 1222).